The chain runs to 448 residues: Glutamate--tRNA ligase 2 (448 aa).

The 'HIGH' region motif lies at 9–19 (PSPTGKLHIGN). Residues 240 to 244 (KISKR) carry the 'KMSKS' region motif. Lys-243 contributes to the ATP binding site.

This sequence belongs to the class-I aminoacyl-tRNA synthetase family. Glutamate--tRNA ligase type 1 subfamily. Monomer.

It localises to the cytoplasm. It catalyses the reaction tRNA(Glu) + L-glutamate + ATP = L-glutamyl-tRNA(Glu) + AMP + diphosphate. In terms of biological role, catalyzes the attachment of glutamate to tRNA(Glu) in a two-step reaction: glutamate is first activated by ATP to form Glu-AMP and then transferred to the acceptor end of tRNA(Glu). This Orientia tsutsugamushi (strain Boryong) (Rickettsia tsutsugamushi) protein is Glutamate--tRNA ligase 2.